The sequence spans 91 residues: Small ribosomal subunit protein bS6 (91 aa).

Belongs to the bacterial ribosomal protein bS6 family.

Its function is as follows. Binds together with bS18 to 16S ribosomal RNA. This is Small ribosomal subunit protein bS6 from Leptospira interrogans serogroup Icterohaemorrhagiae serovar copenhageni (strain Fiocruz L1-130).